A 366-amino-acid polypeptide reads, in one-letter code: Growth hormone secretagogue receptor type 1 (366 aa).

Residues 1 to 40 are Extracellular-facing; it reads MWNATLSEEPGYNLTLPDLGWDAPADNDSLTDELLPLFPA. N3, N13, and N27 each carry an N-linked (GlcNAc...) asparagine glycan. A helical membrane pass occupies residues 41 to 66; it reads PLLAGVTATCVALFVVGIAGNLLTML. Topologically, residues 67–72 are cytoplasmic; sequence VVSRFR. A helical membrane pass occupies residues 73–96; sequence ELRTTTNLYLSSMAFSDLLIFLCM. At 97–117 the chain is on the extracellular side; sequence PLDLVRLWQYRPWNFGDLLCK. Residues C116 and C198 are joined by a disulfide bond. A helical transmembrane segment spans residues 118–139; sequence LFQFVSESCTYATVLTITALSV. Over 140–162 the chain is Cytoplasmic; sequence ERYFAICFPLRAKVVVTKGRVKL. Residues 163–183 form a helical membrane-spanning segment; the sequence is VILVIWAVAFCSAGPIFVLVG. At 184–211 the chain is on the extracellular side; the sequence is VEHENGTDPRDTNECRATEFAVRSGLLT. An N-linked (GlcNAc...) asparagine glycan is attached at N188. The chain crosses the membrane as a helical span at residues 212–235; that stretch reads VMVWVSSVFFFLPVFCLTVLYSLI. Residues 236–263 are Cytoplasmic-facing; that stretch reads GRKLWRRKRGEAAVGASLRDQNHKQTVK. Residues 264–285 form a helical membrane-spanning segment; that stretch reads MLAVVVFAFILCWLPFHVGRYL. Over 286–302 the chain is Extracellular; it reads FSKSFEPGSLEIAQISQ. A helical transmembrane segment spans residues 303 to 326; the sequence is YCNLVSFVLFYLSAAINPILYNIM. Topologically, residues 327–366 are cytoplasmic; the sequence is SKKYRVAVFKLLGFEPFSQRKLSTLKDESSRAWTETSINT.

This sequence belongs to the G-protein coupled receptor 1 family.

Its subcellular location is the cell membrane. Its function is as follows. Receptor for ghrelin, coupled to G-alpha-11 proteins. Stimulates growth hormone secretion. Also binds other growth hormone releasing peptides (GHRP) (e.g. Met-enkephalin and GHRP-6) as well as non-peptide, low molecular weight secretagogues (e.g. L-692,429, MK-0677, adenosine). This is Growth hormone secretagogue receptor type 1 (GHSR) from Mustela putorius furo (European domestic ferret).